Reading from the N-terminus, the 506-residue chain is Chromodomain Y-like protein 2 (506 aa).

One can recognise a Chromo domain in the interval 7 to 67 (YEVERIVDKR…LHMSKDKRIK (61 aa)). The interval 64–177 (KRIKSGKQSS…RHFGNGSHQP (114 aa)) is disordered. Residues 88-98 (KLSHRPSDPGK) are compositionally biased toward basic and acidic residues. Residues 101-120 (GTSHKRKRINPPLAKPKKGY) show a composition bias toward basic residues. Residues 133-143 (KTVSYRTTPSG) show a composition bias toward polar residues.

As to quaternary structure, interacts (via chromo domain) with histone H3K9me3. In terms of tissue distribution, ubiquitously expressed.

It is found in the nucleus. In Homo sapiens (Human), this protein is Chromodomain Y-like protein 2 (CDYL2).